The primary structure comprises 473 residues: Photosystem II CP43 reaction center protein (473 aa).

A propeptide spanning residues 1 to 14 (MKTLYSLRRFYHVE) is cleaved from the precursor. Position 15 is an N-acetylthreonine (Thr15). Thr15 is subject to Phosphothreonine. Helical transmembrane passes span 69–93 (LFEVAHFVPEKPMYEQGLILLPHLA), 134–155 (LLGPETLEESFPFFGYVWKDRN), 178–200 (KALYFGGIYDTWAPGGGDVRKIT), 255–275 (KPFAWARRALVWSGEAYLSYS), and 291–312 (WFNNTAYPSEFYGPTGPEASQA). Residue Glu367 coordinates [CaMn4O5] cluster. Residues 447–471 (RARAAAAGFEKGIDRDFEPVLSMTP) traverse the membrane as a helical segment.

The protein belongs to the PsbB/PsbC family. PsbC subfamily. PSII is composed of 1 copy each of membrane proteins PsbA, PsbB, PsbC, PsbD, PsbE, PsbF, PsbH, PsbI, PsbJ, PsbK, PsbL, PsbM, PsbT, PsbX, PsbY, PsbZ, Psb30/Ycf12, at least 3 peripheral proteins of the oxygen-evolving complex and a large number of cofactors. It forms dimeric complexes. It depends on Binds multiple chlorophylls and provides some of the ligands for the Ca-4Mn-5O cluster of the oxygen-evolving complex. It may also provide a ligand for a Cl- that is required for oxygen evolution. PSII binds additional chlorophylls, carotenoids and specific lipids. as a cofactor.

Its subcellular location is the plastid. It localises to the chloroplast thylakoid membrane. One of the components of the core complex of photosystem II (PSII). It binds chlorophyll and helps catalyze the primary light-induced photochemical processes of PSII. PSII is a light-driven water:plastoquinone oxidoreductase, using light energy to abstract electrons from H(2)O, generating O(2) and a proton gradient subsequently used for ATP formation. The protein is Photosystem II CP43 reaction center protein of Phaseolus vulgaris (Kidney bean).